A 177-amino-acid chain; its full sequence is Secretion monitor (177 aa).

An N-terminal signal peptide occupies residues 1 to 37; that stretch reads MIGILNRWRQFGRRYFWPHLLLGMVAASLGVPSNLSG.

It belongs to the SecM family.

The protein localises to the cytoplasm. Its subcellular location is the cytosol. It localises to the periplasm. Regulates secA expression by translational coupling of the secM secA operon. Translational pausing at a specific Pro residue 5 residues before the end of the protein may allow disruption of a mRNA repressor helix that normally suppresses secA translation initiation. This is Secretion monitor from Yersinia pseudotuberculosis serotype O:1b (strain IP 31758).